Reading from the N-terminus, the 302-residue chain is uncharacterized protein (302 aa).

Disordered stretches follow at residues 15–34 (RHST…RFHK), 143–195 (GMPL…PSHL), and 221–246 (GSEA…RESV). Residues 172-189 (HSDENKATGQGRENRDQP) show a composition bias toward basic and acidic residues.

This is an uncharacterized protein from Homo sapiens (Human).